The following is a 189-amino-acid chain: MNVTFDGIYNEIIENMHHFASEEKDFSKLTQYKDLISKTIDEVVEEVFNDIFSYEKTKTLFDESKRKELEEDFKNWIKGLFEISNDSDLNEFYKEIVKRGIKYVEKDFLPEYLTAIIIKIEDRLKNKLKEELKEDAQEIVDILDDLLKRVILLNVAAYMNFESKVLDYIGINQNLKKNAVKLGIKKMGL.

The protein to M.jannaschii MJ1461.

This is an uncharacterized protein from Methanocaldococcus jannaschii (strain ATCC 43067 / DSM 2661 / JAL-1 / JCM 10045 / NBRC 100440) (Methanococcus jannaschii).